The primary structure comprises 142 residues: Large ribosomal subunit protein uL13 (142 aa).

The protein belongs to the universal ribosomal protein uL13 family. As to quaternary structure, part of the 50S ribosomal subunit.

In terms of biological role, this protein is one of the early assembly proteins of the 50S ribosomal subunit, although it is not seen to bind rRNA by itself. It is important during the early stages of 50S assembly. The polypeptide is Large ribosomal subunit protein uL13 (Aliivibrio fischeri (strain ATCC 700601 / ES114) (Vibrio fischeri)).